The chain runs to 405 residues: Secreted aspartic protease FUS4 (405 aa).

Positions 1–24 (MLAIATLHVALQVFGAFSLSHAAA) are cleaved as a signal peptide. The 352-residue stretch at 49–400 (YLFNVTVGSP…NFEERSFGLA (352 aa)) folds into the Peptidase A1 domain. Residues Asn52, Asn61, Asn107, and Asn123 are each glycosylated (N-linked (GlcNAc...) asparagine). A disulfide bridge connects residues Cys318 and Cys356.

The protein belongs to the peptidase A1 family.

The protein resides in the secreted. Functionally, secreted aspartic protease; part of the gene cluster that mediates the biosynthesis of the mycotoxin fusarin C. Within the cluster, FUS1, FUS2, FUS8 and FUS9 are sufficient for fusarin production. The other FUS cluster members are not essential for fusarin C biosynthesis. In Gibberella fujikuroi (strain CBS 195.34 / IMI 58289 / NRRL A-6831) (Bakanae and foot rot disease fungus), this protein is Secreted aspartic protease FUS4.